We begin with the raw amino-acid sequence, 81 residues long: Photosystem I iron-sulfur center (81 aa).

4Fe-4S ferredoxin-type domains follow at residues 2-31 (SHSV…MIPW) and 39-68 (IAPA…VRVY). Cysteine 11, cysteine 14, cysteine 17, cysteine 21, cysteine 48, cysteine 51, cysteine 54, and cysteine 58 together coordinate [4Fe-4S] cluster.

As to quaternary structure, the eukaryotic PSI reaction center is composed of at least 11 subunits. [4Fe-4S] cluster serves as cofactor.

The protein resides in the plastid. Its subcellular location is the chloroplast thylakoid membrane. The enzyme catalyses reduced [plastocyanin] + hnu + oxidized [2Fe-2S]-[ferredoxin] = oxidized [plastocyanin] + reduced [2Fe-2S]-[ferredoxin]. Its function is as follows. Apoprotein for the two 4Fe-4S centers FA and FB of photosystem I (PSI); essential for photochemical activity. FB is the terminal electron acceptor of PSI, donating electrons to ferredoxin. The C-terminus interacts with PsaA/B/D and helps assemble the protein into the PSI complex. Required for binding of PsaD and PsaE to PSI. PSI is a plastocyanin-ferredoxin oxidoreductase, converting photonic excitation into a charge separation, which transfers an electron from the donor P700 chlorophyll pair to the spectroscopically characterized acceptors A0, A1, FX, FA and FB in turn. In Chloranthus spicatus (Chulantree), this protein is Photosystem I iron-sulfur center.